A 327-amino-acid chain; its full sequence is Tetraacyldisaccharide 4'-kinase (327 aa).

56–63 (FVGGTGKT) is a binding site for ATP.

Belongs to the LpxK family.

The catalysed reaction is a lipid A disaccharide + ATP = a lipid IVA + ADP + H(+). It participates in glycolipid biosynthesis; lipid IV(A) biosynthesis; lipid IV(A) from (3R)-3-hydroxytetradecanoyl-[acyl-carrier-protein] and UDP-N-acetyl-alpha-D-glucosamine: step 6/6. Transfers the gamma-phosphate of ATP to the 4'-position of a tetraacyldisaccharide 1-phosphate intermediate (termed DS-1-P) to form tetraacyldisaccharide 1,4'-bis-phosphate (lipid IVA). This is Tetraacyldisaccharide 4'-kinase from Halorhodospira halophila (strain DSM 244 / SL1) (Ectothiorhodospira halophila (strain DSM 244 / SL1)).